Here is a 1136-residue protein sequence, read N- to C-terminus: Probable LRR receptor-like serine/threonine-protein kinase At4g36180 (1136 aa).

An N-terminal signal peptide occupies residues 1 to 22 (MAMDISLFFIFLVIYAPLVSYA). The Extracellular segment spans residues 23–751 (DESQAEIDAL…TAEGKKKKRK (729 aa)). 8 LRR repeats span residues 93 to 115 (MLRKLSLRSNSFNGTIPTSLAYC), 117 to 139 (RLLSVFLQYNSLSGKLPPAMRNL), 141 to 162 (SLEVFNVAGNRLSGEIPVGLPS), 163 to 186 (SLQFLDISSNTFSGQIPSGLANLT), 187 to 210 (QLQLLNLSYNQLTGEIPASLGNLQ), 211 to 233 (SLQYLWLDFNLLQGTLPSAISNC), 235 to 256 (SLVHLSASENEIGGVIPAAYGA), and 259 to 280 (KLEVLSLSNNNFSGTVPFSLFC). N-linked (GlcNAc...) asparagine glycosylation is found at Asn105 and Asn138. N-linked (GlcNAc...) asparagine glycosylation is found at Asn184, Asn192, and Asn232. N-linked (GlcNAc...) asparagine glycosylation is found at Asn269 and Asn281. LRR repeat units follow at residues 283–304 (SLTIVQLGFNAFSDIVRPETTA), 309–330 (GLQVLDLQENRISGRFPLWLTN), 333–355 (SLKNLDVSGNLFSGEIPPDIGNL), 357–379 (RLEELKLANNSLTGEIPVEIKQC), 381–403 (SLDVLDFEGNSLKGQIPEFLGYM), 405–426 (ALKVLSLGRNSFSGYVPSSMVN), 429–452 (QLERLNLGENNLNGSFPVELMALT), 453–479 (SLSELDLSGNRFSGAVPVSISNLSNLS), 480–500 (FLNLSGNGFSGEIPASVGNLF), 501–524 (KLTALDLSKQNMSGEVPVELSGLP), 525–546 (NVQVIALQGNNFSGVVPEGFSS), 549–571 (SLRYVNLSSNSFSGEIPQTFGFL), 573–595 (LLVSLSLSDNHISGSIPPEIGNC), 597–620 (ALEVLELRSNRLMGHIPADLSRLP), 621–643 (RLKVLDLGQNNLSGEIPPEISQS), 645–666 (SLNSLSLDHNHLSGVIPGSFSG), 669–691 (NLTKMDLSVNNLTGEIPASLALI), and 694–716 (NLVYFNVSSNNLKGEIPASLGSR). Residue Asn365 is glycosylated (N-linked (GlcNAc...) asparagine). Residues Asn441, Asn474, Asn477, Asn482, Asn511, Asn535, Asn554, and Asn594 are each glycosylated (N-linked (GlcNAc...) asparagine). N-linked (GlcNAc...) asparagine glycosylation is present at Asn631. 4 N-linked (GlcNAc...) asparagine glycosylation sites follow: Asn669, Asn679, Asn699, and Asn719. Residues 752–772 (MILMIVMAAIGAFLLSLFCCF) traverse the membrane as a helical segment. The Cytoplasmic segment spans residues 773–1136 (YVYTLLKWRK…ADPTSQPSPA (364 aa)). The segment at 786-819 (QQSTTGEKKRSPGRTSAGSRVRSSTSRSSTENGE) is disordered. Residues 799–815 (RTSAGSRVRSSTSRSST) are compositionally biased toward low complexity. A phosphothreonine mark is found at Thr830 and Thr838. The Protein kinase domain occupies 841–1123 (FDEENVLSRT…LEGCRVGPDV (283 aa)). Tyr915 and Tyr1010 each carry phosphotyrosine.

It belongs to the protein kinase superfamily. Ser/Thr protein kinase family.

Its subcellular location is the cell membrane. The catalysed reaction is L-seryl-[protein] + ATP = O-phospho-L-seryl-[protein] + ADP + H(+). The enzyme catalyses L-threonyl-[protein] + ATP = O-phospho-L-threonyl-[protein] + ADP + H(+). The chain is Probable LRR receptor-like serine/threonine-protein kinase At4g36180 from Arabidopsis thaliana (Mouse-ear cress).